The following is a 334-amino-acid chain: Inositol 2-dehydrogenase (334 aa).

Belongs to the Gfo/Idh/MocA family. Homotetramer.

It carries out the reaction myo-inositol + NAD(+) = scyllo-inosose + NADH + H(+). Functionally, involved in the oxidation of myo-inositol (MI) to 2-keto-myo-inositol (2KMI or 2-inosose). The polypeptide is Inositol 2-dehydrogenase (Cereibacter sphaeroides (strain ATCC 17023 / DSM 158 / JCM 6121 / CCUG 31486 / LMG 2827 / NBRC 12203 / NCIMB 8253 / ATH 2.4.1.) (Rhodobacter sphaeroides)).